The primary structure comprises 103 residues: Small ribosomal subunit protein uS10 (103 aa).

This sequence belongs to the universal ribosomal protein uS10 family. Part of the 30S ribosomal subunit.

Involved in the binding of tRNA to the ribosomes. This Pseudomonas savastanoi pv. phaseolicola (strain 1448A / Race 6) (Pseudomonas syringae pv. phaseolicola (strain 1448A / Race 6)) protein is Small ribosomal subunit protein uS10.